The following is a 333-amino-acid chain: Eukaryotic translation initiation factor 2 subunit 2 (333 aa).

2 disordered regions span residues 1-120 and 139-165; these read MSGD…LDIM and ILEK…QTGP. Serine 2 carries the post-translational modification N-acetylserine. Serine 2 carries the post-translational modification Phosphoserine. Position 13 is a phosphoserine; by PKC; in vitro (serine 13). Positions 13–22 are enriched in basic residues; sequence SKKKKKKKKP. At threonine 36 the chain carries Phosphothreonine. The span at 40 to 51 shows a compositional bias: basic and acidic residues; sequence ETKEVEPEPTED. Position 67 is a phosphoserine; by CK2 (serine 67). The segment covering 96-105 has biased composition (basic and acidic residues); it reads EGVKDLKIEN. A Glycyl lysine isopeptide (Lys-Gly) (interchain with G-Cter in SUMO2) cross-link involves residue lysine 102. Acidic residues-rich tracts occupy residues 106 to 118 and 139 to 149; these read DVQE…DDLD and ILEKDEALEDE. Serine 158 carries the phosphoserine modification. Serine 218 carries the post-translational modification Phosphoserine; by PKA; in vitro. An N6-acetyllysine mark is found at lysine 265 and lysine 293. A C4-type zinc finger spans residues 281-305; sequence CHTCRSPDTILQKDTRLYFLQCETC.

It belongs to the eIF-2-beta/eIF-5 family. Eukaryotic translation initiation factor 2 eIF2 is a heterotrimeric complex composed of an alpha (EIF2S1), a beta (EIF2S2) and a gamma (EIF2S3) chain. eIF2 is member of the 43S pre-initiation complex (43S PIC). eIF2 forms a complex with at least CELF1/CUGBP1, CALR, CALR3, EIF2S1, EIF2S2, HSP90B1 and HSPA5. Interacts with BZW2/5MP1. Interacts with EIF5. Post-translationally, the N-terminus is blocked.

Its subcellular location is the cytoplasm. The protein localises to the cytosol. Functionally, component of the eIF2 complex that functions in the early steps of protein synthesis by forming a ternary complex with GTP and initiator tRNA. This complex binds to a 40S ribosomal subunit, followed by mRNA binding to form the 43S pre-initiation complex (43S PIC). Junction of the 60S ribosomal subunit to form the 80S initiation complex is preceded by hydrolysis of the GTP bound to eIF2 and release of an eIF2-GDP binary complex. In order for eIF2 to recycle and catalyze another round of initiation, the GDP bound to eIF2 must exchange with GTP by way of a reaction catalyzed by eIF2B. This chain is Eukaryotic translation initiation factor 2 subunit 2 (EIF2S2), found in Oryctolagus cuniculus (Rabbit).